The chain runs to 607 residues: Elongation factor 4 (607 aa).

In terms of domain architecture, tr-type G spans 11–193; the sequence is SKIRNFSIIA…QIVEKVPAPT (183 aa). Residues 23–28 and 140–143 contribute to the GTP site; these read DHGKST and NKID.

This sequence belongs to the TRAFAC class translation factor GTPase superfamily. Classic translation factor GTPase family. LepA subfamily.

Its subcellular location is the cell membrane. The enzyme catalyses GTP + H2O = GDP + phosphate + H(+). Functionally, required for accurate and efficient protein synthesis under certain stress conditions. May act as a fidelity factor of the translation reaction, by catalyzing a one-codon backward translocation of tRNAs on improperly translocated ribosomes. Back-translocation proceeds from a post-translocation (POST) complex to a pre-translocation (PRE) complex, thus giving elongation factor G a second chance to translocate the tRNAs correctly. Binds to ribosomes in a GTP-dependent manner. The chain is Elongation factor 4 from Bacillus cereus (strain AH820).